Here is a 152-residue protein sequence, read N- to C-terminus: Probable spermine N(1)-acetyltransferase (152 aa).

The 150-residue stretch at 3–152 (INIKAVTDDN…NGEKVMVKEL (150 aa)) folds into the N-acetyltransferase domain. Acetyl-CoA is bound by residues 82 to 84 (FFI), 89 to 95 (QGKGLGK), and 122 to 131 (NIHAIRLYQR). Tyr129 acts as the Proton donor in catalysis.

The protein belongs to the acetyltransferase family.

The catalysed reaction is an alkane-alpha,omega-diamine + acetyl-CoA = an N-acetylalkane-alpha,omega-diamine + CoA + H(+). The enzyme catalyses spermine + acetyl-CoA = N(1)-acetylspermine + CoA + H(+). The protein operates within amine and polyamine degradation; spermine degradation. Functionally, probably acetylates spermine to N(1)-acetylspermine. This is Probable spermine N(1)-acetyltransferase from Bacillus subtilis subsp. natto (strain BEST195).